A 371-amino-acid chain; its full sequence is Mannonate dehydratase (371 aa).

This sequence belongs to the mannonate dehydratase family. Requires Fe(2+) as cofactor. Mn(2+) is required as a cofactor.

It catalyses the reaction D-mannonate = 2-dehydro-3-deoxy-D-gluconate + H2O. It functions in the pathway carbohydrate metabolism; pentose and glucuronate interconversion. Catalyzes the dehydration of D-mannonate. The polypeptide is Mannonate dehydratase (Geobacillus thermodenitrificans (strain NG80-2)).